Consider the following 294-residue polypeptide: Transcription factor nsy-7 (294 aa).

Disordered regions lie at residues 43-119 (CNLR…TPDL) and 167-191 (LRLP…DSPL). 2 stretches are compositionally biased toward polar residues: residues 52–63 (DQPTTSSNSVKE) and 81–115 (RRQS…SNDP). Residues 192–232 (QTRMKGWQREYIKEVIKDSHYPTEEELRDIEQKCDLSRKQI) constitute a DNA-binding region (homeobox; atypical). The interval 238 to 274 (KRLTNPNRKPRVNHHDEKRKEQEERDSLADPDDDMIN) is disordered. Positions 250–265 (NHHDEKRKEQEERDSL) are enriched in basic and acidic residues.

In terms of tissue distribution, expressed widely, including gut, the amphid sheath glial cells, and head and tail neurons including AWC, ASE, and ASH. Expressed in AWC (ON) olfactory neuron but not AWC (OFF).

It is found in the nucleus. In terms of biological role, transcriptional regulator which binds DNA consensus sequence 5'-CCTTAAC-3'. Plays a role in establishing and maintaining asymmetric cell fates in chemosensory AWC neurons during larval neuronal development. This is achieved by repressing the expression of multiple AWC (OFF) genes, including srsx-3 and hlh-11 in the AWC (ON) neuron. Activates expression of sox-2 in the AWC (ON) neuron. The sequence is that of Transcription factor nsy-7 from Caenorhabditis elegans.